A 339-amino-acid chain; its full sequence is MIDQKIFETTLNIDDPTNFCTNVEAHLLKELENIYVGKCFKNSFILNITGVIQRSPCFIMRTNNSGRGYMHVRFSAVVSYLNAFDLIAAVKIIKNDSNIILGESLLTEPVTIVIPSSESQNNVAEVGQIVPVQLANSSVYYIPGRQQASATGSIFIPKHTFSVYHVQEELTQEQALNLTKLVNIIEMLLESRSKKDFKQICFFEKLYYTYSISSDEILDLKIWKGPKGKEMSRLKPCNVLSFLYDALKNKSSSLGFWARPPNLLKSSPLAYQQDQNSFNATELPIICSAEVMFVTLLKEIINYLQFMNDLCDTFNNEQLIKRHENIWMLIEQRKIGHDF.

This sequence belongs to the Asfivirus DNA-directed RNA polymerase RPB7 homolog family. In terms of assembly, part of the viral DNA-directed RNA polymerase that consists of 8 polII-like subunits (RPB1, RPB2, RPB3, RPB5, RPB6, RPB7, RPB9, RPB10), a capping enzyme and a termination factor.

The protein resides in the host cytoplasm. It localises to the virion. Functionally, component of the DNA-directed RNA polymerase (RNAP) that catalyzes the transcription in the cytoplasm of viral DNA into RNA using the four ribonucleoside triphosphates as substrates. The chain is DNA-directed RNA polymerase RPB7 homolog from African swine fever virus (strain Badajoz 1971 Vero-adapted) (Ba71V).